The chain runs to 309 residues: ASC1-like protein 1 (309 aa).

6 helical membrane passes run Phe27–Phe47, Cys84–Phe104, Ala130–Glu150, Phe156–Phe176, Phe215–Leu235, and Tyr260–Ile280. One can recognise a TLC domain in the interval Arg75–Lys289.

It is found in the endoplasmic reticulum membrane. Its function is as follows. Mediates resistance to sphinganine-analog mycotoxins (SAMs) by restoring the sphingolipid biosynthesis. Could salvage the transport of GPI-anchored proteins from the endoplasmic reticulum to the Golgi apparatus in ceramides-depleted cells after SAM exposure. The chain is ASC1-like protein 1 from Oryza sativa subsp. japonica (Rice).